The following is a 461-amino-acid chain: MSFFFSRQSDISFLLFSESTSTTRNSSQARLLSRLAVDGSKGRAMPVLNTTRATAAASGVDATLTIRDGPVFHGTAFGANSNISGEAVFTTSLVGYPESMTDPSYRGQILVFTQPLIGNYGVPSNQRDEYGLLKYFESPHIQCAGVVVADVAEKYSHWTAVESLSEWCAREGVPVISGVDTRAIVTHLREQGSSLARISIGDEYDADEDEGFIDPGAINLVKRVSTKAPFVVSNPNATFHVALIDCGVKENILRSLVSRGASVTVFPYNYPIHKVADNFDGVFISNGPGDPTHCQETVYNLGRLMETSSVPIMGICLGHQLLALAVGAQTIKLKYGNRAHNIPALDLTTGQCHITSQNHGYAVDASTLPSEFKEYFVNLNDGSNEGMMHKTRPIFSTQFHPEAKGGPMDSSYLFDKYLENVQMYKDNSKVYRDNRPSQLMIDILSKERVGVEPSPLAANAI.

The 188-residue stretch at 240-427 folds into the Glutamine amidotransferase type-1 domain; that stretch reads HVALIDCGVK…LENVQMYKDN (188 aa). Catalysis depends on C316, which acts as the Nucleophile. Catalysis depends on residues H400 and E402.

This sequence belongs to the CarA family. Heterodimer composed of 2 chains; the small (or glutamine) chain promotes the hydrolysis of glutamine to ammonia, which is used by the large (or ammonia) chain to synthesize carbamoyl phosphate.

Its subcellular location is the cytoplasm. It carries out the reaction hydrogencarbonate + L-glutamine + 2 ATP + H2O = carbamoyl phosphate + L-glutamate + 2 ADP + phosphate + 2 H(+). The catalysed reaction is L-glutamine + H2O = L-glutamate + NH4(+). The protein operates within amino-acid biosynthesis; L-arginine biosynthesis; carbamoyl phosphate from bicarbonate: step 1/1. In terms of biological role, small subunit of the arginine-specific carbamoyl phosphate synthase (CPSase). CPSase catalyzes the formation of carbamoyl phosphate from the ammonia moiety of glutamine, carbonate, and phosphate donated by ATP, constituting the first step of 2 biosynthetic pathways, one leading to arginine and/or urea and the other to pyrimidine nucleotides. The small subunit (glutamine amidotransferase) binds and cleaves glutamine to supply the large subunit with the substrate ammonia. This Chaetomium globosum (strain ATCC 6205 / CBS 148.51 / DSM 1962 / NBRC 6347 / NRRL 1970) (Soil fungus) protein is Carbamoyl phosphate synthase arginine-specific small chain (CPA1).